The chain runs to 111 residues: uncharacterized protein (111 aa).

A helical transmembrane segment spans residues 64 to 86; that stretch reads VLCWLVLPLYCCNLLNLFFNIFL.

The protein resides in the membrane. This is an uncharacterized protein from Saccharomyces cerevisiae (strain ATCC 204508 / S288c) (Baker's yeast).